We begin with the raw amino-acid sequence, 494 residues long: Glutamate--tRNA ligase (494 aa).

Residues 10 to 20 (PSPTGDPHVGT) carry the 'HIGH' region motif. Zn(2+) contacts are provided by C107, C109, C134, and H136. The 'KMSKS' region signature appears at 251–255 (KLSKR). K254 contributes to the ATP binding site.

The protein belongs to the class-I aminoacyl-tRNA synthetase family. Glutamate--tRNA ligase type 1 subfamily. In terms of assembly, monomer. The cofactor is Zn(2+).

It localises to the cytoplasm. The catalysed reaction is tRNA(Glu) + L-glutamate + ATP = L-glutamyl-tRNA(Glu) + AMP + diphosphate. Catalyzes the attachment of glutamate to tRNA(Glu) in a two-step reaction: glutamate is first activated by ATP to form Glu-AMP and then transferred to the acceptor end of tRNA(Glu). In Pseudomonas aeruginosa (strain UCBPP-PA14), this protein is Glutamate--tRNA ligase.